The following is a 248-amino-acid chain: Positive alginate biosynthesis regulatory protein (248 aa).

Residues 2 to 117 form the Response regulatory domain; sequence NVLIVDDEPL…DLAEALKKAS (116 aa). Asp-54 is modified (4-aspartylphosphate). An HTH LytTR-type domain is found at 142–247; sequence ISARTRKGIE…VAGVRRLMHQ (106 aa).

It participates in glycan biosynthesis; alginate biosynthesis [regulation]. Its function is as follows. Positive regulator of the algD gene, which codes for a GDP-mannose dehydrogenase, a key step enzyme in the alginate biosynthesis pathway. The sequence is that of Positive alginate biosynthesis regulatory protein (algR) from Pseudomonas aeruginosa (strain ATCC 15692 / DSM 22644 / CIP 104116 / JCM 14847 / LMG 12228 / 1C / PRS 101 / PAO1).